A 247-amino-acid polypeptide reads, in one-letter code: Probable transcriptional regulatory protein EUBELI_00902 (247 aa).

Belongs to the TACO1 family.

It is found in the cytoplasm. This chain is Probable transcriptional regulatory protein EUBELI_00902, found in Lachnospira eligens (strain ATCC 27750 / DSM 3376 / VPI C15-48 / C15-B4) (Eubacterium eligens).